Here is a 278-residue protein sequence, read N- to C-terminus: 2-succinyl-6-hydroxy-2,4-cyclohexadiene-1-carboxylate synthase (278 aa).

This sequence belongs to the AB hydrolase superfamily. MenH family. Monomer.

It catalyses the reaction 5-enolpyruvoyl-6-hydroxy-2-succinyl-cyclohex-3-ene-1-carboxylate = (1R,6R)-6-hydroxy-2-succinyl-cyclohexa-2,4-diene-1-carboxylate + pyruvate. It functions in the pathway quinol/quinone metabolism; 1,4-dihydroxy-2-naphthoate biosynthesis; 1,4-dihydroxy-2-naphthoate from chorismate: step 3/7. Its pathway is quinol/quinone metabolism; menaquinone biosynthesis. Functionally, catalyzes a proton abstraction reaction that results in 2,5-elimination of pyruvate from 2-succinyl-5-enolpyruvyl-6-hydroxy-3-cyclohexene-1-carboxylate (SEPHCHC) and the formation of 2-succinyl-6-hydroxy-2,4-cyclohexadiene-1-carboxylate (SHCHC). This Photorhabdus laumondii subsp. laumondii (strain DSM 15139 / CIP 105565 / TT01) (Photorhabdus luminescens subsp. laumondii) protein is 2-succinyl-6-hydroxy-2,4-cyclohexadiene-1-carboxylate synthase.